Consider the following 366-residue polypeptide: Sec-independent protein translocase protein TatC (366 aa).

Helical transmembrane passes span 42-62, 70-90, 97-117, 134-154, 179-199, 207-227, and 230-250; these read VLAV…LFTM, HMPA…FIPL, AVFI…APGL, ILFY…VFGF, LFFA…LVIV, LAGF…ILTP, and VLSQ…GLFV. The segment covering 266 to 279 has biased composition (acidic residues); sequence EAEESGAADDESDE. Positions 266-366 are disordered; sequence EAEESGAADD…PSPKKPDSPV (101 aa). Basic and acidic residues-rich tracts occupy residues 281–290 and 301–318; these read VSARHAEYEA and DMDK…RLES. The span at 319–333 shows a compositional bias: polar residues; that stretch reads DSSASDDGPESNTAG.

Belongs to the TatC family. In terms of assembly, the Tat system comprises two distinct complexes: a TatABC complex, containing multiple copies of TatA, TatB and TatC subunits, and a separate TatA complex, containing only TatA subunits. Substrates initially bind to the TatABC complex, which probably triggers association of the separate TatA complex to form the active translocon.

It is found in the cell inner membrane. Functionally, part of the twin-arginine translocation (Tat) system that transports large folded proteins containing a characteristic twin-arginine motif in their signal peptide across membranes. Together with TatB, TatC is part of a receptor directly interacting with Tat signal peptides. The sequence is that of Sec-independent protein translocase protein TatC from Halothiobacillus neapolitanus (strain ATCC 23641 / c2) (Thiobacillus neapolitanus).